The following is a 145-amino-acid chain: Ribonuclease H (145 aa).

In terms of domain architecture, RNase H type-1 spans 1-141 (MQEVIIYSDG…ADALANRGVA (141 aa)). The Mg(2+) site is built by Asp9, Glu47, Asp69, and Asp133.

It belongs to the RNase H family. Monomer. It depends on Mg(2+) as a cofactor.

Its subcellular location is the cytoplasm. The enzyme catalyses Endonucleolytic cleavage to 5'-phosphomonoester.. Functionally, endonuclease that specifically degrades the RNA of RNA-DNA hybrids. In Cupriavidus pinatubonensis (strain JMP 134 / LMG 1197) (Cupriavidus necator (strain JMP 134)), this protein is Ribonuclease H.